The sequence spans 164 residues: UPF0304 protein ECA3037 (164 aa).

The protein belongs to the UPF0304 family.

This Pectobacterium atrosepticum (strain SCRI 1043 / ATCC BAA-672) (Erwinia carotovora subsp. atroseptica) protein is UPF0304 protein ECA3037.